Here is a 1299-residue protein sequence, read N- to C-terminus: Cilia- and flagella-associated protein 251 (1299 aa).

The tract at residues 1–351 (MSDTEENPLE…SQKPEDILAQ (351 aa)) is disordered. 3 stretches are compositionally biased toward acidic residues: residues 17 to 45 (EMEEEKEEKKEEEEEEEEGEKEKEEEEEE), 91 to 162 (EKEE…EEDA), and 176 to 189 (ESQEDGEGLEEWVE). A compositionally biased stretch (basic and acidic residues) spans 190 to 199 (KEEQREGEEV). Over residues 212–228 (EEEGWEEEKSGEEEKSE) the composition is skewed to acidic residues. Positions 229–257 (ESERSKERGGEEEGQEKEEAEHEGEREEG) are enriched in basic and acidic residues. Residues 269–280 (REEEEEEEDTET) show a composition bias toward acidic residues. Basic and acidic residues-rich tracts occupy residues 281–297 (TETKAGRAKEEKKEKQN) and 331–351 (NSMKVDDTEEASQKPEDILAQ). WD repeat units follow at residues 484-526 (PVHT…IWKW), 534-574 (ACTL…CWFE), 585-624 (VLTEKTFNKLVGKFSQSVFHLKLPQVLSATKEGKLVVWDI), 643-678 (PRKLVHLQKEAITVLMTIDSYIVTGDIKGNIKFYDH), 681-741 (SVVN…VYHM), 745-785 (GTKL…VWDF), 791-828 (LFSRTFEKGLGVQCLTYNPEGALLGAGFTEGTVYILDA), 838-874 (PFKYSKSSVSHCCFSHDSNYMATADVNFTVAVYMVVV), 881-924 (WEYL…EYNL), 935-975 (LDVH…LFNA), 981-1027 (RKTL…ILPV), 1033-1071 (KTCAIVCHPNGVAGMALSYDGRFAFTAGGQDRSVVQWKI), 1109-1149 (YFYY…FYPS), and 1169-1209 (GKLI…GYTN).

Its subcellular location is the cytoplasm. The protein localises to the cytoskeleton. It localises to the cilium axoneme. It is found in the cell projection. The protein resides in the cilium. Its subcellular location is the flagellum. Its function is as follows. Involved in spermatozoa motility. May also regulate cilium motility through its role in the assembly of the axonemal radial spokes. This Mus musculus (Mouse) protein is Cilia- and flagella-associated protein 251.